A 564-amino-acid polypeptide reads, in one-letter code: Juvenile hormone esterase (564 aa).

The N-terminal stretch at 1–19 (MTSHVLALAFLLHACTALA) is a signal peptide. An N-linked (GlcNAc...) asparagine glycan is attached at N81. Cysteines 89 and 109 form a disulfide. N180 is a glycosylation site (N-linked (GlcNAc...) asparagine). Residue S220 is the Acyl-ester intermediate of the active site. Residue E351 is the Charge relay system of the active site. The N-linked (GlcNAc...) asparagine glycan is linked to N402. The active-site Charge relay system is the H465. An N-linked (GlcNAc...) asparagine glycan is attached at N515.

Belongs to the type-B carboxylesterase/lipase family.

It carries out the reaction juvenile hormone I + H2O = juvenile hormone I carboxylate + methanol + H(+). It catalyses the reaction juvenile hormone III + H2O = juvenile hormone III carboxylate + methanol + H(+). In terms of biological role, JH esterase plays a crucial role in the decrease of JH activity in lepidopteran insects, by hydrolyzing the methyl ester of JH. It is also involved in the transport of JH. This Heliothis virescens (Tobacco budworm moth) protein is Juvenile hormone esterase.